The following is a 733-amino-acid chain: Folic acid synthesis protein fol1 (733 aa).

DHNA stretches follow at residues 55 to 167 (VVVE…YAER) and 179 to 277 (IEFS…QIYR). The residue at position 281 (Y281) is a Phosphotyrosine. The interval 295-454 (NKIAYLSFGS…LPSQGIRLYS (160 aa)) is HPK. A Pterin-binding domain is found at 465 to 724 (ALTMGILNVT…DTKEMSKVVG (260 aa)). The segment at 467-733 (TMGILNVTPD…GMANAIRYVP (267 aa)) is DHPS. N472 is a binding site for Mg(2+). Residues T511, D546, N565, D637, K677, and 712–714 (RVH) each bind (7,8-dihydropterin-6-yl)methyl diphosphate.

This sequence in the N-terminal section; belongs to the DHNA family. In the central section; belongs to the HPPK family. It in the C-terminal section; belongs to the DHPS family. Mg(2+) serves as cofactor.

Its subcellular location is the cytoplasm. The catalysed reaction is 7,8-dihydroneopterin = 6-hydroxymethyl-7,8-dihydropterin + glycolaldehyde. The enzyme catalyses 6-hydroxymethyl-7,8-dihydropterin + ATP = (7,8-dihydropterin-6-yl)methyl diphosphate + AMP + H(+). It carries out the reaction (7,8-dihydropterin-6-yl)methyl diphosphate + 4-aminobenzoate = 7,8-dihydropteroate + diphosphate. Its pathway is cofactor biosynthesis; tetrahydrofolate biosynthesis; 2-amino-4-hydroxy-6-hydroxymethyl-7,8-dihydropteridine diphosphate from 7,8-dihydroneopterin triphosphate: step 3/4. The protein operates within cofactor biosynthesis; tetrahydrofolate biosynthesis; 2-amino-4-hydroxy-6-hydroxymethyl-7,8-dihydropteridine diphosphate from 7,8-dihydroneopterin triphosphate: step 4/4. It functions in the pathway cofactor biosynthesis; tetrahydrofolate biosynthesis; 7,8-dihydrofolate from 2-amino-4-hydroxy-6-hydroxymethyl-7,8-dihydropteridine diphosphate and 4-aminobenzoate: step 1/2. Functionally, catalyzes three sequential steps of tetrahydrofolate biosynthesis. The polypeptide is Folic acid synthesis protein fol1 (fol1) (Schizosaccharomyces pombe (strain 972 / ATCC 24843) (Fission yeast)).